The primary structure comprises 641 residues: Protein GAMETE EXPRESSED 3 (641 aa).

The first 29 residues, 1–29, serve as a signal peptide directing secretion; the sequence is MVAFRFVYIPLPFFFFFFFFFVFFSGVSQ. Residues 441–461 form a helical membrane-spanning segment; that stretch reads IIWFLLFEFVIMVLFAALVRF. Residues 570-627 form a disordered region; sequence ITIFQTPSDESSSEESYRDEHYDDVADDEHDEDDLDRKQKGKLLAHSEGSSNDGDGIA. Over residues 584-593 the composition is skewed to basic and acidic residues; that stretch reads ESYRDEHYDD. Acidic residues predominate over residues 594 to 603; the sequence is VADDEHDEDD.

Expressed in mature siliques and in pollen, mainly in the sperm cells. Detected in the egg cell within the female gametophyte.

The protein localises to the cell membrane. Required for micropylar pollen tube guidance. Plays a role during early embryo patterning. The sequence is that of Protein GAMETE EXPRESSED 3 (GEX3) from Arabidopsis thaliana (Mouse-ear cress).